We begin with the raw amino-acid sequence, 208 residues long: AN1-type zinc finger protein 6 (208 aa).

The A20-type zinc-finger motif lies at 8–42; the sequence is SQVPMLCSTGCGFYGNPRTNGMCSVCYKEHLQRQN. Residues C14, C18, C30, and C33 each coordinate Zn(2+). The segment covering 41 to 68 has biased composition (polar residues); that stretch reads QNSSNGRISPPATSVSSLSESLPVQCTD. The interval 41-140 is disordered; that stretch reads QNSSNGRISP…PSEEQSKSLE (100 aa). S49 is modified (phosphoserine). Low complexity predominate over residues 75–94; sequence QSTLDSTSSSMQPSPVSNQS. Composition is skewed to polar residues over residues 95 to 110 and 120 to 133; these read LLSESVASSQLDSTSV and LQASVSDTAQQPSE. An AN1-type zinc finger spans residues 143 to 189; the sequence is KQKKNRCFMCRKKVGLTGFECRCGNVYCGVHRYSDVHNCSYNYKADA. Residues C149, C152, C163, C165, C170, H173, H179, and C181 each coordinate Zn(2+). K204 is subject to N6-acetyllysine.

As to quaternary structure, interacts with PKN1. Interacts with TRAF2. Interacts with mono- and polyubiquitin. Interacts with PEX6. Interacts with PEX5 (Cys-linked ubiquitinated).

It localises to the cytoplasm. Involved in regulation of TNF-alpha induced NF-kappa-B activation and apoptosis. Involved in modulation of 'Lys-48'-linked polyubiquitination status of TRAF2 and decreases association of TRAF2 with RIPK1. Required for PTS1 target sequence-dependent protein import into peroxisomes and PEX5 stability; may cooperate with PEX6. In vitro involved in PEX5 export from the cytosol to peroxisomes. The polypeptide is AN1-type zinc finger protein 6 (ZFAND6) (Pongo abelii (Sumatran orangutan)).